Here is a 581-residue protein sequence, read N- to C-terminus: Proline--tRNA ligase (581 aa).

Belongs to the class-II aminoacyl-tRNA synthetase family. ProS type 1 subfamily. Homodimer.

Its subcellular location is the cytoplasm. The enzyme catalyses tRNA(Pro) + L-proline + ATP = L-prolyl-tRNA(Pro) + AMP + diphosphate. Its function is as follows. Catalyzes the attachment of proline to tRNA(Pro) in a two-step reaction: proline is first activated by ATP to form Pro-AMP and then transferred to the acceptor end of tRNA(Pro). As ProRS can inadvertently accommodate and process non-cognate amino acids such as alanine and cysteine, to avoid such errors it has two additional distinct editing activities against alanine. One activity is designated as 'pretransfer' editing and involves the tRNA(Pro)-independent hydrolysis of activated Ala-AMP. The other activity is designated 'posttransfer' editing and involves deacylation of mischarged Ala-tRNA(Pro). The misacylated Cys-tRNA(Pro) is not edited by ProRS. The polypeptide is Proline--tRNA ligase (Blochmanniella pennsylvanica (strain BPEN)).